Consider the following 413-residue polypeptide: CCA-adding enzyme (413 aa).

The ATP site is built by Ser42 and Lys45. Residues Ser42 and Lys45 each coordinate CTP. Residues Asp54, Asp56, and Asp107 each contribute to the Mg(2+) site. ATP is bound by residues His130, Lys150, and Tyr159. His130, Lys150, and Tyr159 together coordinate CTP.

Belongs to the tRNA nucleotidyltransferase/poly(A) polymerase family. Archaeal CCA-adding enzyme subfamily. Homodimer. The cofactor is Mg(2+).

It catalyses the reaction a tRNA precursor + 2 CTP + ATP = a tRNA with a 3' CCA end + 3 diphosphate. It carries out the reaction a tRNA with a 3' CCA end + 2 CTP + ATP = a tRNA with a 3' CCACCA end + 3 diphosphate. Its function is as follows. Catalyzes the addition and repair of the essential 3'-terminal CCA sequence in tRNAs without using a nucleic acid template. Adds these three nucleotides in the order of C, C, and A to the tRNA nucleotide-73, using CTP and ATP as substrates and producing inorganic pyrophosphate. tRNA 3'-terminal CCA addition is required both for tRNA processing and repair. Also involved in tRNA surveillance by mediating tandem CCA addition to generate a CCACCA at the 3' terminus of unstable tRNAs. While stable tRNAs receive only 3'-terminal CCA, unstable tRNAs are marked with CCACCA and rapidly degraded. In Sulfurisphaera tokodaii (strain DSM 16993 / JCM 10545 / NBRC 100140 / 7) (Sulfolobus tokodaii), this protein is CCA-adding enzyme.